The primary structure comprises 180 residues: Acireductone dioxygenase 1 (180 aa).

Fe(2+)-binding residues include His-82, His-84, Glu-88, and His-127. His-82, His-84, Glu-88, and His-127 together coordinate Ni(2+).

It belongs to the acireductone dioxygenase (ARD) family. It depends on Fe(2+) as a cofactor. The cofactor is Ni(2+).

It localises to the cytoplasm. Its subcellular location is the nucleus. The enzyme catalyses 1,2-dihydroxy-5-(methylsulfanyl)pent-1-en-3-one + O2 = 4-methylsulfanyl-2-oxobutanoate + formate + 2 H(+). It catalyses the reaction 1,2-dihydroxy-5-(methylsulfanyl)pent-1-en-3-one + O2 = 3-(methylsulfanyl)propanoate + CO + formate + 2 H(+). Its pathway is amino-acid biosynthesis; L-methionine biosynthesis via salvage pathway; L-methionine from S-methyl-5-thio-alpha-D-ribose 1-phosphate: step 5/6. In terms of biological role, catalyzes 2 different reactions between oxygen and the acireductone 1,2-dihydroxy-3-keto-5-methylthiopentene (DHK-MTPene) depending upon the metal bound in the active site. Fe-containing acireductone dioxygenase (Fe-ARD) produces formate and 2-keto-4-methylthiobutyrate (KMTB), the alpha-ketoacid precursor of methionine in the methionine recycle pathway. Ni-containing acireductone dioxygenase (Ni-ARD) produces methylthiopropionate, carbon monoxide and formate, and does not lie on the methionine recycle pathway. The protein is Acireductone dioxygenase 1 of Sorghum bicolor (Sorghum).